The sequence spans 210 residues: Probable GTP-binding protein EngB (210 aa).

In terms of domain architecture, EngB-type G spans Gln24–Leu199. Residues Gly32–Ser39, Gly59–Met63, Asp77–Gly80, Thr144–Asp147, and Phe178–Ser180 each bind GTP. Ser39 and Thr61 together coordinate Mg(2+).

The protein belongs to the TRAFAC class TrmE-Era-EngA-EngB-Septin-like GTPase superfamily. EngB GTPase family. Mg(2+) is required as a cofactor.

Functionally, necessary for normal cell division and for the maintenance of normal septation. In Methylococcus capsulatus (strain ATCC 33009 / NCIMB 11132 / Bath), this protein is Probable GTP-binding protein EngB.